A 134-amino-acid chain; its full sequence is Large ribosomal subunit protein bL20 (134 aa).

Belongs to the bacterial ribosomal protein bL20 family.

Binds directly to 23S ribosomal RNA and is necessary for the in vitro assembly process of the 50S ribosomal subunit. It is not involved in the protein synthesizing functions of that subunit. In Rhizobium etli (strain CIAT 652), this protein is Large ribosomal subunit protein bL20.